A 355-amino-acid chain; its full sequence is DNA polymerase IV (355 aa).

The 182-residue stretch at 7-188 (IIHIDMDCFY…LPLSKIPGVG (182 aa)) folds into the UmuC domain. Residues Asp-11 and Asp-106 each coordinate Mg(2+). Glu-107 is a catalytic residue.

This sequence belongs to the DNA polymerase type-Y family. In terms of assembly, monomer. The cofactor is Mg(2+).

It is found in the cytoplasm. The enzyme catalyses DNA(n) + a 2'-deoxyribonucleoside 5'-triphosphate = DNA(n+1) + diphosphate. Its function is as follows. Poorly processive, error-prone DNA polymerase involved in untargeted mutagenesis. Copies undamaged DNA at stalled replication forks, which arise in vivo from mismatched or misaligned primer ends. These misaligned primers can be extended by PolIV. Exhibits no 3'-5' exonuclease (proofreading) activity. May be involved in translesional synthesis, in conjunction with the beta clamp from PolIII. The sequence is that of DNA polymerase IV from Mannheimia succiniciproducens (strain KCTC 0769BP / MBEL55E).